Here is a 99-residue protein sequence, read N- to C-terminus: UPF0235 protein Cag_0319 (99 aa).

The protein belongs to the UPF0235 family.

The sequence is that of UPF0235 protein Cag_0319 from Chlorobium chlorochromatii (strain CaD3).